The sequence spans 87 residues: Selenoprotein W (87 aa).

The cysteinyl-selenocysteine (Cys-Sec); redox-active cross-link spans 10–13 (CGAU). Residue U13 is a non-standard amino acid, selenocysteine. At C37 the chain carries S-glutathionyl cysteine.

This sequence belongs to the SelWTH family. Selenoprotein W subfamily. As to quaternary structure, interacts with DPYSL2, PRDX1, YWHAB, YWHAG, HSP70 and HSP90. In terms of tissue distribution, detected in muscle, heart, tongue, brain, lung, spleen, kidney and liver. Highest levels expressed in muscle and heart whereas lowest levels detected in liver (at protein level).

It localises to the cytoplasm. Functionally, plays a role as a glutathione (GSH)-dependent antioxidant. May be involved in a redox-related process. May play a role in the myopathies of selenium deficiency. This chain is Selenoprotein W, found in Ovis aries (Sheep).